Consider the following 215-residue polypeptide: Cytochrome b6 (215 aa).

A helical membrane pass occupies residues 32-52; sequence IFYCLGGITFTCFLVQVATGF. Cysteine 35 contributes to the heme c binding site. Positions 86 and 100 each coordinate heme b. The next 3 helical transmembrane spans lie at 90-110, 116-136, and 186-206; these read ASMMVLMMILHVFRVWLTGGF, LTWTTGVIMAVCTVSFGVTGY, and LHTFVLPLLTAVFMLMHFLMI. Residues histidine 187 and histidine 202 each contribute to the heme b site.

This sequence belongs to the cytochrome b family. PetB subfamily. In terms of assembly, the 4 large subunits of the cytochrome b6-f complex are cytochrome b6, subunit IV (17 kDa polypeptide, PetD), cytochrome f and the Rieske protein, while the 4 small subunits are PetG, PetL, PetM and PetN. The complex functions as a dimer. It depends on heme b as a cofactor. The cofactor is heme c.

Its subcellular location is the plastid. It localises to the chloroplast thylakoid membrane. Component of the cytochrome b6-f complex, which mediates electron transfer between photosystem II (PSII) and photosystem I (PSI), cyclic electron flow around PSI, and state transitions. This chain is Cytochrome b6, found in Stigeoclonium helveticum (Green alga).